Consider the following 185-residue polypeptide: Elongation factor P 1 (185 aa).

The protein belongs to the elongation factor P family.

Its subcellular location is the cytoplasm. It functions in the pathway protein biosynthesis; polypeptide chain elongation. Its function is as follows. Involved in peptide bond synthesis. Stimulates efficient translation and peptide-bond synthesis on native or reconstituted 70S ribosomes in vitro. Probably functions indirectly by altering the affinity of the ribosome for aminoacyl-tRNA, thus increasing their reactivity as acceptors for peptidyl transferase. This is Elongation factor P 1 (efp1) from Chlamydia trachomatis serovar D (strain ATCC VR-885 / DSM 19411 / UW-3/Cx).